Consider the following 328-residue polypeptide: MAAVVVAAAGGAGPAVLQVAGLYRGLCAVRSRALGLGLVSPAQLRVFPVRPGSGRPEGGADSSGVGAEAELQANPFYDRYRDKIQLLRRSDPAAFESRLEKRSEFRKQPVGHSRQGDFIKCVEQKTDALGKQSVNRGFTKDKTLSSIFNIEMVKEKTAEEIKQIWQQYFAAKDTVYAVIPAEKFDLIWNRAQSCPTFLCALPRREGYEFFVGQWTGTELHFTALINIQTRGEAAASQLILYHYPELKEEKGIVLMTAEMDSTFLNVAEAQCIANQVQLFYATDRKETYGLVETFNLRPNEFKYMSVIAELEQSGLGAELKCAQNQNKT.

The transit peptide at 1–57 directs the protein to the mitochondrion; it reads MAAVVVAAAGGAGPAVLQVAGLYRGLCAVRSRALGLGLVSPAQLRVFPVRPGSGRPE.

Belongs to the ATP11 family. In terms of assembly, interacts with ATP5F1B; involved in the assembly of the F1 component of the mitochondrial ATP synthase (ATPase). Weakly expressed in muscle.

Its subcellular location is the mitochondrion inner membrane. In terms of biological role, has a complex stabilizing activity in the assembly of the mitochondrial F1-F0 complex. The chain is ATP synthase mitochondrial F1 complex assembly factor 1 from Homo sapiens (Human).